Consider the following 189-residue polypeptide: Large ribosomal subunit protein uL10 (189 aa).

This sequence belongs to the universal ribosomal protein uL10 family. As to quaternary structure, part of the ribosomal stalk of the 50S ribosomal subunit. The N-terminus interacts with L11 and the large rRNA to form the base of the stalk. The C-terminus forms an elongated spine to which L12 dimers bind in a sequential fashion forming a multimeric L10(L12)X complex.

Forms part of the ribosomal stalk, playing a central role in the interaction of the ribosome with GTP-bound translation factors. The polypeptide is Large ribosomal subunit protein uL10 (Rippkaea orientalis (strain PCC 8801 / RF-1) (Cyanothece sp. (strain PCC 8801))).